We begin with the raw amino-acid sequence, 451 residues long: Oxygen-independent coproporphyrinogen III oxidase (451 aa).

Positions 45 to 278 (IPAGAAISLY…FETARELFLA (234 aa)) constitute a Radical SAM core domain. Y54 is a binding site for S-adenosyl-L-methionine. [4Fe-4S] cluster-binding residues include C60 and C64. F66 contacts S-adenosyl-L-methionine. [4Fe-4S] cluster is bound at residue C67. Residues G111, 112 to 113 (GT), E144, Q171, R183, D208, A242, and I328 contribute to the S-adenosyl-L-methionine site.

Belongs to the anaerobic coproporphyrinogen-III oxidase family. Monomer. The cofactor is [4Fe-4S] cluster.

It is found in the cytoplasm. It catalyses the reaction coproporphyrinogen III + 2 S-adenosyl-L-methionine = protoporphyrinogen IX + 2 5'-deoxyadenosine + 2 L-methionine + 2 CO2. It participates in porphyrin-containing compound metabolism; protoporphyrin-IX biosynthesis; protoporphyrinogen-IX from coproporphyrinogen-III (AdoMet route): step 1/1. Involved in the heme biosynthesis. Catalyzes the anaerobic oxidative decarboxylation of propionate groups of rings A and B of coproporphyrinogen III to yield the vinyl groups in protoporphyrinogen IX. The sequence is that of Oxygen-independent coproporphyrinogen III oxidase (hemN) from Paracoccus denitrificans (strain Pd 1222).